Here is a 299-residue protein sequence, read N- to C-terminus: ATP phosphoribosyltransferase (299 aa).

Belongs to the ATP phosphoribosyltransferase family. Long subfamily. Mg(2+) serves as cofactor.

It localises to the cytoplasm. It carries out the reaction 1-(5-phospho-beta-D-ribosyl)-ATP + diphosphate = 5-phospho-alpha-D-ribose 1-diphosphate + ATP. It participates in amino-acid biosynthesis; L-histidine biosynthesis; L-histidine from 5-phospho-alpha-D-ribose 1-diphosphate: step 1/9. With respect to regulation, feedback inhibited by histidine. Functionally, catalyzes the condensation of ATP and 5-phosphoribose 1-diphosphate to form N'-(5'-phosphoribosyl)-ATP (PR-ATP). Has a crucial role in the pathway because the rate of histidine biosynthesis seems to be controlled primarily by regulation of HisG enzymatic activity. The chain is ATP phosphoribosyltransferase (hisG) from Pasteurella multocida (strain Pm70).